The sequence spans 54 residues: MAKASARVIITMACTDCKNRNYSTYKNKKNDSGRLELRKFCPTCGHHTLHRETR.

It belongs to the bacterial ribosomal protein bL33 family.

In Symbiobacterium thermophilum (strain DSM 24528 / JCM 14929 / IAM 14863 / T), this protein is Large ribosomal subunit protein bL33.